The primary structure comprises 151 residues: 6,7-dimethyl-8-ribityllumazine synthase (151 aa).

Residues Phe-18, 49-51 (ALE), and 74-76 (CVI) each bind 5-amino-6-(D-ribitylamino)uracil. Residue 79-80 (ET) coordinates (2S)-2-hydroxy-3-oxobutyl phosphate. Catalysis depends on His-82, which acts as the Proton donor. Asn-107 provides a ligand contact to 5-amino-6-(D-ribitylamino)uracil. Arg-121 lines the (2S)-2-hydroxy-3-oxobutyl phosphate pocket.

This sequence belongs to the DMRL synthase family.

It catalyses the reaction (2S)-2-hydroxy-3-oxobutyl phosphate + 5-amino-6-(D-ribitylamino)uracil = 6,7-dimethyl-8-(1-D-ribityl)lumazine + phosphate + 2 H2O + H(+). It participates in cofactor biosynthesis; riboflavin biosynthesis; riboflavin from 2-hydroxy-3-oxobutyl phosphate and 5-amino-6-(D-ribitylamino)uracil: step 1/2. Its function is as follows. Catalyzes the formation of 6,7-dimethyl-8-ribityllumazine by condensation of 5-amino-6-(D-ribitylamino)uracil with 3,4-dihydroxy-2-butanone 4-phosphate. This is the penultimate step in the biosynthesis of riboflavin. This chain is 6,7-dimethyl-8-ribityllumazine synthase, found in Bartonella tribocorum (strain CIP 105476 / IBS 506).